The chain runs to 539 residues: Tetracenomycin B2 monooxygenase-dioxygenase (539 aa).

4 residues coordinate FAD: Leu15, Glu35, Gln128, and Leu152. Tyr231 (proton acceptor) is an active-site residue. Asp313 contacts FAD.

The protein belongs to the PheA/TfdB FAD monooxygenase family. Requires FAD as cofactor.

It carries out the reaction tetracenomycin B2 + 2 NADPH + 2 O2 + 2 H(+) = 8-demethyltetracenomycin C + 2 NADP(+) + H2O. It catalyses the reaction tetracenomycin A2 + 2 NADPH + 2 O2 + 2 H(+) = tetracenomycin C + 2 NADP(+) + H2O. Its pathway is antibiotic biosynthesis. Functionally, involved in the biosynthesis of elloramycin, an antitumor polyketide. In vivo, probably catalyzes the triple hydroxylation of 8-demethyltetracenomycin A2 (tetracenomycin B2) at positions C-4, C-4a and C-12a to give 8-demethyltetracenomycin C (8-DMTC). In vitro, catalyzes the triple hydroxylation of tetracenomycin A2 (TCM A2) to give tetracenomycin C (TCM C). Uses NADPH as an electron donor and requires molecular O(2). This chain is Tetracenomycin B2 monooxygenase-dioxygenase, found in Streptomyces olivaceus.